The sequence spans 315 residues: Ribosomal RNA small subunit methyltransferase H (315 aa).

S-adenosyl-L-methionine-binding positions include 32–34 (GGH), Asp52, Phe78, Asp100, and Gln107.

Belongs to the methyltransferase superfamily. RsmH family.

The protein resides in the cytoplasm. It carries out the reaction cytidine(1402) in 16S rRNA + S-adenosyl-L-methionine = N(4)-methylcytidine(1402) in 16S rRNA + S-adenosyl-L-homocysteine + H(+). Functionally, specifically methylates the N4 position of cytidine in position 1402 (C1402) of 16S rRNA. The chain is Ribosomal RNA small subunit methyltransferase H from Psychromonas ingrahamii (strain DSM 17664 / CCUG 51855 / 37).